The chain runs to 450 residues: Phosphopentomutase (450 aa).

Ser-93 serves as the catalytic Phosphoserine intermediate. Residues Ser-93, Asp-231, Asp-233, and Asp-235 each contribute to the Mg(2+) site. The residue at position 93 (Ser-93) is a Phosphoserine; by autocatalysis.

This sequence belongs to the phosphohexose mutase family. As to quaternary structure, homotetramer. Mg(2+) is required as a cofactor. Post-translationally, activated by phosphorylation.

The enzyme catalyses alpha-D-ribose 1-phosphate = D-ribose 5-phosphate. The catalysed reaction is 2-deoxy-alpha-D-ribose 1-phosphate = 2-deoxy-D-ribose 5-phosphate. Its function is as follows. Catalyzes the conversion of deoxyribose 1-phosphate to deoxyribose 5-phosphate. Also shows weak activity with glucose 1-phosphate and mannose 1-phosphate. Could be involved in pentose biosynthesis. The sequence is that of Phosphopentomutase from Thermococcus kodakarensis (strain ATCC BAA-918 / JCM 12380 / KOD1) (Pyrococcus kodakaraensis (strain KOD1)).